A 74-amino-acid chain; its full sequence is uncharacterized protein (74 aa).

The stretch at 29-63 (LNSKKSALQKDKELQQQAKAQESALAGEELRRRAL) forms a coiled coil.

This is an uncharacterized protein from Pseudoalteromonas phage PM2 (Bacteriophage PM2).